The primary structure comprises 430 residues: UPF0597 protein Clos_2050 (430 aa).

This sequence belongs to the UPF0597 family.

This chain is UPF0597 protein Clos_2050, found in Alkaliphilus oremlandii (strain OhILAs) (Clostridium oremlandii (strain OhILAs)).